The chain runs to 252 residues: JmjC domain-containing protein A (252 aa).

Residues 103–252 (PYLRNFGMLD…VSCWGKEMIM (150 aa)) form the JmjC domain.

The chain is JmjC domain-containing protein A (jcdA) from Dictyostelium discoideum (Social amoeba).